Here is a 68-residue protein sequence, read N- to C-terminus: MTPDQRLTELEIRVAEQEKTIDELSSVLAEQWKTIDRLSKKLGALTDRFLELEEQTAPDVPVTKPPHW.

The protein belongs to the SlyX family.

This chain is Protein SlyX homolog, found in Brucella anthropi (strain ATCC 49188 / DSM 6882 / CCUG 24695 / JCM 21032 / LMG 3331 / NBRC 15819 / NCTC 12168 / Alc 37) (Ochrobactrum anthropi).